Reading from the N-terminus, the 298-residue chain is Cation-efflux pump FieF (298 aa).

A helical membrane pass occupies residues 24-44; sequence LLIKIFAWWYTGSVSILAALV. Zn(2+) contacts are provided by aspartate 45 and aspartate 49. 2 helical membrane passes run 80–100 and 112–132; these read SLAA…LTSI and PGVG…LVTF. Residues histidine 151 and aspartate 155 each coordinate Zn(2+). The next 2 membrane-spanning stretches (helical) occupy residues 154–174 and 176–196; these read SDVM…YGWH and ADAL…LRMG.

The protein belongs to the cation diffusion facilitator (CDF) transporter (TC 2.A.4) family. FieF subfamily. Homodimer.

It is found in the cell inner membrane. The enzyme catalyses Zn(2+)(in) + H(+)(out) = Zn(2+)(out) + H(+)(in). It catalyses the reaction Cd(2+)(in) + H(+)(out) = Cd(2+)(out) + H(+)(in). The catalysed reaction is Fe(2+)(in) + H(+)(out) = Fe(2+)(out) + H(+)(in). In terms of biological role, divalent metal cation transporter which exports Zn(2+), Cd(2+) and possibly Fe(2+). May be involved in zinc and iron detoxification by efflux. The protein is Cation-efflux pump FieF of Salmonella typhi.